The chain runs to 345 residues: S-adenosylmethionine:tRNA ribosyltransferase-isomerase (345 aa).

This sequence belongs to the QueA family. In terms of assembly, monomer.

Its subcellular location is the cytoplasm. The catalysed reaction is 7-aminomethyl-7-carbaguanosine(34) in tRNA + S-adenosyl-L-methionine = epoxyqueuosine(34) in tRNA + adenine + L-methionine + 2 H(+). It participates in tRNA modification; tRNA-queuosine biosynthesis. Transfers and isomerizes the ribose moiety from AdoMet to the 7-aminomethyl group of 7-deazaguanine (preQ1-tRNA) to give epoxyqueuosine (oQ-tRNA). This chain is S-adenosylmethionine:tRNA ribosyltransferase-isomerase, found in Shewanella baltica (strain OS185).